The chain runs to 160 residues: Cyclic pyranopterin monophosphate synthase (160 aa).

Residues 75-77 and 113-114 each bind substrate; these read LCH and ME. Residue D128 is part of the active site.

Belongs to the MoaC family. Homohexamer; trimer of dimers.

The catalysed reaction is (8S)-3',8-cyclo-7,8-dihydroguanosine 5'-triphosphate = cyclic pyranopterin phosphate + diphosphate. It functions in the pathway cofactor biosynthesis; molybdopterin biosynthesis. Catalyzes the conversion of (8S)-3',8-cyclo-7,8-dihydroguanosine 5'-triphosphate to cyclic pyranopterin monophosphate (cPMP). This is Cyclic pyranopterin monophosphate synthase from Ruthia magnifica subsp. Calyptogena magnifica.